The sequence spans 220 residues: Thiopurine S-methyltransferase (220 aa).

Positions 14, 49, 70, and 127 each coordinate S-adenosyl-L-methionine.

This sequence belongs to the class I-like SAM-binding methyltransferase superfamily. TPMT family.

It is found in the cytoplasm. The catalysed reaction is S-adenosyl-L-methionine + a thiopurine = S-adenosyl-L-homocysteine + a thiopurine S-methylether.. The protein is Thiopurine S-methyltransferase of Gluconobacter oxydans (strain 621H) (Gluconobacter suboxydans).